A 620-amino-acid polypeptide reads, in one-letter code: Ran-binding protein 10 (620 aa).

Residues 1-41 are disordered; sequence MAAATADPGAGNPQPGDSSGGGAGGGLPSPGEQELSRRLQR. N-acetylalanine is present on Ala2. The segment covering 18–28 has biased composition (gly residues); that stretch reads SSGGGAGGGLP. Residues 35-222 form the B30.2/SPRY domain; the sequence is LSRRLQRLYP…VDANFGQQPF (188 aa). In terms of domain architecture, LisH spans 253–285; the sequence is WQAVLQNMVSSYLVHHGYCATATAFARMTETPI. A CTLH domain is found at 291–348; that stretch reads SIKNRQKIQKLVLEGRVGEAIETTQRFYPGLLEHNPNLLFMLKCRQFVEMVNGTDSEV. Over residues 347-398 the composition is skewed to polar residues; that stretch reads EVRSLSSRSPKSQDSYPGSPSLSPRHGPSSSHMHNTGADSPSCSNGVASTKS. The disordered stretch occupies residues 347 to 458; sequence EVRSLSSRSP…ETSDSEMEME (112 aa). Phosphoserine is present on Ser361. Tyr362 is subject to Phosphotyrosine. Ser365, Ser367, Ser369, Ser422, Ser451, and Ser453 each carry phosphoserine. The segment covering 409-436 has biased composition (low complexity); that stretch reads SSSSSSSSSSSSSSPSSVNYSESNSTDS.

This sequence belongs to the RANBP9/10 family. As to quaternary structure, may form homodimers. Identified in the CTLH complex that contains GID4, RANBP9 and/or RANBP10, MKLN1, MAEA, RMND5A (or alternatively its paralog RMND5B), GID8, ARMC8, WDR26 and YPEL5. Within this complex, MAEA, RMND5A (or alternatively its paralog RMND5B), GID8, WDR26, and RANBP9 and/or RANBP10 form the catalytic core, while GID4, MKLN1, ARMC8 and YPEL5 have ancillary roles. Interacts with RAN and RANBP9. Interacts with the HGF receptor MET. Interacts with AR. Interacts with TUBB1. Interacts with YPEL5. May interact with TUBB5. Interacts with DDX4. Broadly expressed, with highest levels in skeletal muscle.

The protein localises to the cytoplasm. The protein resides in the cytosol. It is found in the nucleus. Its function is as follows. May act as an adapter protein to couple membrane receptors to intracellular signaling pathways. Core component of the CTLH E3 ubiquitin-protein ligase complex that selectively accepts ubiquitin from UBE2H and mediates ubiquitination and subsequent proteasomal degradation of the transcription factor HBP1. Enhances dihydrotestosterone-induced transactivation activity of AR, as well as dexamethasone-induced transactivation activity of NR3C1, but does not affect estrogen-induced transactivation. Acts as a guanine nucleotide exchange factor (GEF) for RAN GTPase. May play an essential role in hemostasis and in maintaining microtubule dynamics with respect to both platelet shape and function. The sequence is that of Ran-binding protein 10 (RANBP10) from Homo sapiens (Human).